We begin with the raw amino-acid sequence, 802 residues long: Leucine--tRNA ligase (802 aa).

Positions 41 to 52 (PYPSGQGLHVGH) match the 'HIGH' region motif. The short motif at 580–584 (KMSKS) is the 'KMSKS' region element. An ATP-binding site is contributed by lysine 583.

Belongs to the class-I aminoacyl-tRNA synthetase family.

The protein resides in the cytoplasm. The enzyme catalyses tRNA(Leu) + L-leucine + ATP = L-leucyl-tRNA(Leu) + AMP + diphosphate. The chain is Leucine--tRNA ligase from Alkaliphilus oremlandii (strain OhILAs) (Clostridium oremlandii (strain OhILAs)).